A 283-amino-acid polypeptide reads, in one-letter code: Alkaline ceramidase (283 aa).

5 residues coordinate Ca(2+): D28, W29, E31, N33, and E42. The next 2 helical transmembrane spans lie at 43 to 63 (FVNT…IMLF) and 69 to 89 (FVTP…LSSM). H92 is a Zn(2+) binding site. 4 helical membrane-spanning segments follow: residues 98–118 (IGQL…FSLF), 134–151 (TFSW…GLSW), 154–174 (PIVN…MLYT), and 187–209 (LGIR…RIFC). Zn(2+)-binding residues include H221 and H225. The helical transmembrane segment at 222–242 (GFWHIFIFIAAYTVLVLFAYF) threads the bilayer.

This sequence belongs to the alkaline ceramidase family. It depends on Zn(2+) as a cofactor. As to expression, expressed in the central midgut of late embryos. In brain, it is present at the interhemispheric junction and in groups of cells in the central brain.

Its subcellular location is the membrane. The catalysed reaction is an N-acylsphing-4-enine + H2O = sphing-4-enine + a fatty acid. In terms of biological role, hydrolyzes the sphingolipid ceramide into sphingosine and free fatty acid. This chain is Alkaline ceramidase (bwa), found in Drosophila melanogaster (Fruit fly).